A 223-amino-acid chain; its full sequence is Cytidylate kinase (223 aa).

Residue 12-20 coordinates ATP; that stretch reads GPSGVGKGT.

The protein belongs to the cytidylate kinase family. Type 1 subfamily.

It is found in the cytoplasm. The catalysed reaction is CMP + ATP = CDP + ADP. It carries out the reaction dCMP + ATP = dCDP + ADP. The sequence is that of Cytidylate kinase from Xylella fastidiosa (strain M23).